Reading from the N-terminus, the 144-residue chain is NADH dehydrogenase [ubiquinone] 1 alpha subcomplex subunit 13 (144 aa).

A helical membrane pass occupies residues 30–51 (LSGYSMLAIGIGTLIYGHWSIM).

Belongs to the complex I NDUFA13 subunit family. In terms of assembly, complex I is composed of 45 different subunits. Interacts with CARD15, but not with CARD4. Interacts with STAT3, but not with STAT1, STAT2 and STAT5A. Interacts with OLFM4.

The protein resides in the mitochondrion inner membrane. It localises to the nucleus. In terms of biological role, accessory subunit of the mitochondrial membrane respiratory chain NADH dehydrogenase (Complex I), that is believed not to be involved in catalysis. Complex I functions in the transfer of electrons from NADH to the respiratory chain. The immediate electron acceptor for the enzyme is believed to be ubiquinone. Involved in the interferon/all-trans-retinoic acid (IFN/RA) induced cell death. This apoptotic activity is inhibited by interaction with viral IRF1. Prevents the transactivation of STAT3 target genes. May play a role in CARD15-mediated innate mucosal responses and serve to regulate intestinal epithelial cell responses to microbes. The protein is NADH dehydrogenase [ubiquinone] 1 alpha subcomplex subunit 13 (NDUFA13) of Gorilla gorilla gorilla (Western lowland gorilla).